The sequence spans 409 residues: Serine/threonine transporter SstT (409 aa).

9 helical membrane passes run Gly14–Ser34, Phe48–Ile68, Ile82–Phe102, Ala141–Leu161, Ile192–Gly212, Leu216–Val236, Ile290–Leu310, Ile322–Val342, and Phe357–Ile377.

The protein belongs to the dicarboxylate/amino acid:cation symporter (DAACS) (TC 2.A.23) family.

Its subcellular location is the cell inner membrane. The catalysed reaction is L-serine(in) + Na(+)(in) = L-serine(out) + Na(+)(out). The enzyme catalyses L-threonine(in) + Na(+)(in) = L-threonine(out) + Na(+)(out). Involved in the import of serine and threonine into the cell, with the concomitant import of sodium (symport system). This chain is Serine/threonine transporter SstT, found in Shewanella woodyi (strain ATCC 51908 / MS32).